Reading from the N-terminus, the 304-residue chain is DCN1-like protein 3 (304 aa).

Disordered regions lie at residues 1 to 87 (MGQC…EESS) and 284 to 304 (EVEG…EEQT). The N-myristoyl glycine moiety is linked to residue Gly2. In terms of domain architecture, DCUN1 spans 86–278 (SSLQRLEELF…LFDTFVEWEM (193 aa)).

Part of a complex containing DCUN1D3, CUL3 and RBX1. Interacts (via the DCUN1 domain) with the unneddylated cullins: interacts with CUL1, CUL2, CUL3, CUL4A, CUL4B and CUL5; these interactions promote the cullin neddylation and the identity of the cullin dictates the affinity of the interaction. Interacts preferentially with CUL3; this interaction triggers the relocalization of CUL3 to the cell membrane where CUL3 is neddylated. Interacts (via DCUN1 domain) with RBX1. May also interact with regulators or subunits of cullin-RING ligases such as RNF7, ELOB and DDB1; these interactions are bridged by cullins. Interacts (via DCUN1 domain) with CAND1; this interaction is bridged by cullins and strongly inhibits cullin neddylation. These CAND-cullin-DCNL complexes can only be neddylated in the presence of a substrate adapter. Interacts (via DCUN1 domain) with the N-terminally acetylated form of UBE2M and UBE2F. As to expression, highest levels of expression are in the testis. Very low levels of expression in the heart, brain, skeletal muscle, kidney, liver, spleen, lung and ovary.

It is found in the cell membrane. The protein resides in the cytoplasm. The protein localises to the nucleus. It localises to the perinuclear region. Functionally, contributes to the neddylation of all cullins by transferring NEDD8 from N-terminally acetylated NEDD8-conjugating E2s enzyme to different cullin C-terminal domain-RBX complexes and may play a role in the cell cycle progression by regulating the SCF ubiquitin E3 ligase complex, after UV damage. At the cell membrane, can promote and as well inhibit cullins neddylation. The chain is DCN1-like protein 3 from Mus musculus (Mouse).